A 413-amino-acid chain; its full sequence is Chloramphenicol efflux pump Rv0191 (413 aa).

12 consecutive transmembrane segments (helical) span residues L23 to A43, V55 to P75, L89 to F109, A110 to I130, I150 to L170, L176 to L196, V226 to I246, N256 to A276, A286 to F306, A312 to V332, G353 to L373, and L378 to V398.

This sequence belongs to the major facilitator superfamily.

It is found in the cell membrane. With respect to regulation, inhibited by the drug efflux pump inhibitors verapamil, resperine, piperine, chlorpromazine and carbonyl cyanide m-chlorophenylhydrazone (CCCP). Functionally, active efflux pump that plays an important role in chloramphenicol resistance. Overexpression causes pyrazinamide resistance. The polypeptide is Chloramphenicol efflux pump Rv0191 (Mycobacterium tuberculosis (strain ATCC 25618 / H37Rv)).